The following is a 447-amino-acid chain: MNVLLNPLNRRHRLRYDIPVMPGAFPLVGHLPAIVCDLPRLLRRAERTLGSHFWLDFGPAGHLMTCVDPHAFALLRHKDVSSALIEEIAPELLGGTLVAQDGGAHRQARDAIKAAFLPEGLTQAGIGDLFAPVIRARVQAWRDRGDVTILPETGDLMLKLIFTLMGVPAQDLPGWHRKYRQLLQLIVAPSVDLPGLPLRRGRAARDWIDAQLRQFVRDARAHAARTGLINDMVSAFDRSDDALSDDLLVANIRLLLLAGHDTTASTMAWMVIELARQPMLWDALVEEAQRVGAVPTRHADLEQCPVAEALFRETLRVHPATTLLPRRALQELQLGQRRIPAGTHLCIPLLHFSTSALLHEAPDQFRLARWLQRTEPIRPVDMLQFGTGPHVCIGYHLVWLELVQFSIALALTMHKAGVRPLLLSGVEKGRRYYPTAHPSMTIRIGFS.

Residue Cys-392 participates in heme binding.

The protein belongs to the cytochrome P450 family. It depends on heme as a cofactor.

Cytochromes P450 are a group of heme-thiolate monooxygenases. They oxidize a variety of structurally unrelated compounds, including steroids, fatty acids, and xenobiotics. In Sinorhizobium fredii (strain NBRC 101917 / NGR234), this protein is Cytochrome P450 BJ-4 homolog (cyp117A2).